A 319-amino-acid chain; its full sequence is HTH-type transcriptional regulator YidZ (319 aa).

One can recognise an HTH lysR-type domain in the interval 8–65; it reads LDLNLLLCLQLLMQERSVTKAAKRMNVTPSAVSKSLAKLRAWFDDPLFVNTPLGLAPT. The segment at residues 25 to 44 is a DNA-binding region (H-T-H motif); the sequence is VTKAAKRMNVTPSAVSKSLA.

The protein belongs to the LysR transcriptional regulatory family.

In terms of biological role, involved in anaerobic NO protection. The protein is HTH-type transcriptional regulator YidZ of Salmonella agona (strain SL483).